A 70-amino-acid chain; its full sequence is Frenatin 4.1 (70 aa).

The first 22 residues, 1–22 (MAFLKKSLFLVLFLGLVNLSIC), serve as a signal peptide directing secretion. Residues 23-46 (EEEKREEENKEEEDENEALSEVKR) constitute a propeptide that is removed on maturation. Lysine 68 is modified (lysine amide).

The protein belongs to the frog skin active peptide (FSAP) family. Frenatin subfamily. In terms of tissue distribution, expressed by the skin glands.

It localises to the secreted. The protein resides in the target cell membrane. Its function is as follows. Peptide with unknown function. Does not show antimicrobial activity against S.aureus (MIC&gt;512 ug/mL), E.coli (MIC&gt;512 ug/mL) and C.albicans (MIC&gt;512 ug/mL). Does not show hemolytic activity. Functionally, antimicrobial peptide with activity against E.coli (MIC=128 ug/mL or 54 uM) and C.albicans (MIC=256 ug/mL or 108 uM). Does not show activity against S.aureus (MIC&gt;512 ug/mL). Does not show hemolytic activity. The sequence is that of Frenatin 4.1 from Nyctimystes infrafrenatus (White-lipped tree frog).